A 769-amino-acid polypeptide reads, in one-letter code: Protein transport protein sec39 (769 aa).

It belongs to the SEC39 family. In terms of assembly, component of a peripheral membrane protein complex consisting of dsl1, sec39 and tip20.

Its subcellular location is the endoplasmic reticulum membrane. Its function is as follows. Required for protein transport between the Golgi and the endoplasmic reticulum. May contribute to tethering of coatomer-coated retrograde transport vesicles to the ER membrane through interaction with and stabilization of the SNARE complex. In Schizosaccharomyces pombe (strain 972 / ATCC 24843) (Fission yeast), this protein is Protein transport protein sec39.